The following is a 337-amino-acid chain: 4-hydroxy-3-methylbut-2-enyl diphosphate reductase (337 aa).

A [4Fe-4S] cluster-binding site is contributed by cysteine 25. 2 residues coordinate (2E)-4-hydroxy-3-methylbut-2-enyl diphosphate: histidine 54 and histidine 87. Dimethylallyl diphosphate is bound by residues histidine 54 and histidine 87. Isopentenyl diphosphate is bound by residues histidine 54 and histidine 87. Position 109 (cysteine 109) interacts with [4Fe-4S] cluster. Histidine 137 serves as a coordination point for (2E)-4-hydroxy-3-methylbut-2-enyl diphosphate. A dimethylallyl diphosphate-binding site is contributed by histidine 137. Histidine 137 is a binding site for isopentenyl diphosphate. The Proton donor role is filled by glutamate 139. Threonine 177 provides a ligand contact to (2E)-4-hydroxy-3-methylbut-2-enyl diphosphate. A [4Fe-4S] cluster-binding site is contributed by cysteine 207. The (2E)-4-hydroxy-3-methylbut-2-enyl diphosphate site is built by serine 235, serine 236, asparagine 237, and serine 280. Residues serine 235, serine 236, asparagine 237, and serine 280 each contribute to the dimethylallyl diphosphate site. Residues serine 235, serine 236, asparagine 237, and serine 280 each coordinate isopentenyl diphosphate.

The protein belongs to the IspH family. [4Fe-4S] cluster serves as cofactor.

The enzyme catalyses isopentenyl diphosphate + 2 oxidized [2Fe-2S]-[ferredoxin] + H2O = (2E)-4-hydroxy-3-methylbut-2-enyl diphosphate + 2 reduced [2Fe-2S]-[ferredoxin] + 2 H(+). The catalysed reaction is dimethylallyl diphosphate + 2 oxidized [2Fe-2S]-[ferredoxin] + H2O = (2E)-4-hydroxy-3-methylbut-2-enyl diphosphate + 2 reduced [2Fe-2S]-[ferredoxin] + 2 H(+). It functions in the pathway isoprenoid biosynthesis; dimethylallyl diphosphate biosynthesis; dimethylallyl diphosphate from (2E)-4-hydroxy-3-methylbutenyl diphosphate: step 1/1. Its pathway is isoprenoid biosynthesis; isopentenyl diphosphate biosynthesis via DXP pathway; isopentenyl diphosphate from 1-deoxy-D-xylulose 5-phosphate: step 6/6. In terms of biological role, catalyzes the conversion of 1-hydroxy-2-methyl-2-(E)-butenyl 4-diphosphate (HMBPP) into a mixture of isopentenyl diphosphate (IPP) and dimethylallyl diphosphate (DMAPP). Acts in the terminal step of the DOXP/MEP pathway for isoprenoid precursor biosynthesis. This Leifsonia xyli subsp. xyli (strain CTCB07) protein is 4-hydroxy-3-methylbut-2-enyl diphosphate reductase.